The sequence spans 486 residues: Ribulose bisphosphate carboxylase large chain (486 aa).

Substrate is bound by residues Asn-125 and Thr-175. Lys-177 functions as the Proton acceptor in the catalytic mechanism. Lys-179 provides a ligand contact to substrate. The Mg(2+) site is built by Lys-203, Asp-205, and Glu-206. Lys-203 carries the post-translational modification N6-carboxylysine. Residue His-295 is the Proton acceptor of the active site. 3 residues coordinate substrate: Arg-296, His-328, and Ser-380.

It belongs to the RuBisCO large chain family. Type I subfamily. In terms of assembly, heterohexadecamer of 8 large chains and 8 small chains. Requires Mg(2+) as cofactor.

It carries out the reaction 2 (2R)-3-phosphoglycerate + 2 H(+) = D-ribulose 1,5-bisphosphate + CO2 + H2O. The enzyme catalyses D-ribulose 1,5-bisphosphate + O2 = 2-phosphoglycolate + (2R)-3-phosphoglycerate + 2 H(+). Functionally, ruBisCO catalyzes two reactions: the carboxylation of D-ribulose 1,5-bisphosphate, the primary event in carbon dioxide fixation, as well as the oxidative fragmentation of the pentose substrate. Both reactions occur simultaneously and in competition at the same active site. The polypeptide is Ribulose bisphosphate carboxylase large chain (Cereibacter sphaeroides (Rhodobacter sphaeroides)).